The sequence spans 391 residues: Na(+)/H(+) antiporter NhaA (391 aa).

11 helical membrane passes run 14–34, 47–67, 87–107, 117–137, 146–166, 171–191, 205–225, 252–272, 280–300, 318–338, and 356–376; these read AGGI…NSPL, FGMS…FLLI, IFPA…YVAF, GWAI…ALLG, VFLL…IALF, LSTM…MLNA, AILW…GVVI, VAFG…LEGV, MLPL…IFTF, FIHI…SIFI, and LGIL…LHFS.

It belongs to the NhaA Na(+)/H(+) (TC 2.A.33) antiporter family.

The protein resides in the cell inner membrane. The catalysed reaction is Na(+)(in) + 2 H(+)(out) = Na(+)(out) + 2 H(+)(in). Functionally, na(+)/H(+) antiporter that extrudes sodium in exchange for external protons. The polypeptide is Na(+)/H(+) antiporter NhaA (Vibrio campbellii (strain ATCC BAA-1116)).